A 145-amino-acid chain; its full sequence is Transcription antitermination protein NusB (145 aa).

Belongs to the NusB family.

In terms of biological role, involved in transcription antitermination. Required for transcription of ribosomal RNA (rRNA) genes. Binds specifically to the boxA antiterminator sequence of the ribosomal RNA (rrn) operons. The protein is Transcription antitermination protein NusB of Psychromonas ingrahamii (strain DSM 17664 / CCUG 51855 / 37).